A 104-amino-acid polypeptide reads, in one-letter code: Large ribosomal subunit protein bL21 (104 aa).

This sequence belongs to the bacterial ribosomal protein bL21 family. In terms of assembly, part of the 50S ribosomal subunit. Contacts protein L20.

This protein binds to 23S rRNA in the presence of protein L20. The chain is Large ribosomal subunit protein bL21 from Streptococcus pneumoniae serotype 2 (strain D39 / NCTC 7466).